A 708-amino-acid chain; its full sequence is Leukotoxin translocation ATP-binding protein LktB (708 aa).

One can recognise a Peptidase C39 domain in the interval 1-126 (MEANHQRNDL…ACYQGQLILV (126 aa)). One can recognise an ABC transmembrane type-1 domain in the interval 155 to 437 (FLETLIVSIF…LAQLWQDFQQ (283 aa)). Transmembrane regions (helical) follow at residues 159-179 (LIVS…FQVV), 192-212 (LNII…LSGL), 270-290 (ALTS…MWYY), 296-316 (LVIL…SPIL), and 389-409 (VMVI…LSIG). Residues 469–704 (IAFKNIRFRY…SNGLYSYLHQ (236 aa)) form the ABC transporter domain. 503–510 (GRSGSGKS) contributes to the ATP binding site.

The protein belongs to the ABC transporter superfamily. Protein-1 exporter (TC 3.A.1.109) family. As to quaternary structure, homodimer.

It localises to the cell inner membrane. The catalysed reaction is ATP + H2O + proteinSide 1 = ADP + phosphate + proteinSide 2.. Its function is as follows. Part of the ABC transporter complex LktBD involved in leukotoxin export. Transmembrane domains (TMD) form a pore in the inner membrane and the ATP-binding domain (NBD) is responsible for energy generation. The sequence is that of Leukotoxin translocation ATP-binding protein LktB (lktB) from Mannheimia glucosida.